Reading from the N-terminus, the 920-residue chain is WD repeat-containing protein 47 (920 aa).

Positions Lys-10–Asn-42 constitute a LisH domain. The region spanning Phe-45–Ser-102 is the CTLH domain. Phosphothreonine is present on Thr-285. Phosphoserine occurs at positions 289, 292, 297, and 312. Residues Tyr-371–Thr-380 show a composition bias toward basic and acidic residues. Residues Tyr-371 to Asp-422 form a disordered region. Ser-423 is modified (phosphoserine). A disordered region spans residues Leu-501–Ser-594. Low complexity predominate over residues Ser-506–Thr-523. Residues Asn-538–His-552 are compositionally biased toward polar residues. Thr-543 carries the post-translational modification Phosphothreonine. WD repeat units lie at residues Glu-605–Ala-644, His-660–Thr-699, Met-707–Leu-749, Gly-754–Val-792, Gly-799–Ser-838, Pro-841–Leu-880, and Glu-887–Ser-919.

Interacts with MAP1S (via WD repeats). In terms of tissue distribution, enriched in the nervous system (at protein level).

It localises to the cytoplasm. Its subcellular location is the cytoskeleton. The protein is WD repeat-containing protein 47 (Wdr47) of Mus musculus (Mouse).